The chain runs to 444 residues: Ribosomal protein uS12 methylthiotransferase RimO (444 aa).

The MTTase N-terminal domain occupies 4–118 (IKYGVVSLGC…LSDAIKKSIE (115 aa)). [4Fe-4S] cluster-binding residues include cysteine 13, cysteine 48, cysteine 81, cysteine 155, cysteine 159, and cysteine 162. In terms of domain architecture, Radical SAM core spans 141–373 (TTQKHYAYLR…MQRDIVKSIN (233 aa)). The 67-residue stretch at 374 to 440 (ADKVNKVYKV…EYDLIGVVCD (67 aa)) folds into the TRAM domain.

This sequence belongs to the methylthiotransferase family. RimO subfamily. It depends on [4Fe-4S] cluster as a cofactor.

The protein localises to the cytoplasm. It catalyses the reaction L-aspartate(89)-[ribosomal protein uS12]-hydrogen + (sulfur carrier)-SH + AH2 + 2 S-adenosyl-L-methionine = 3-methylsulfanyl-L-aspartate(89)-[ribosomal protein uS12]-hydrogen + (sulfur carrier)-H + 5'-deoxyadenosine + L-methionine + A + S-adenosyl-L-homocysteine + 2 H(+). Catalyzes the methylthiolation of an aspartic acid residue of ribosomal protein uS12. This Clostridium tetani (strain Massachusetts / E88) protein is Ribosomal protein uS12 methylthiotransferase RimO.